Here is a 224-residue protein sequence, read N- to C-terminus: Urease accessory protein UreF (224 aa).

This sequence belongs to the UreF family. As to quaternary structure, ureD, UreF and UreG form a complex that acts as a GTP-hydrolysis-dependent molecular chaperone, activating the urease apoprotein by helping to assemble the nickel containing metallocenter of UreC. The UreE protein probably delivers the nickel.

The protein localises to the cytoplasm. Functionally, required for maturation of urease via the functional incorporation of the urease nickel metallocenter. In Citrobacter koseri (strain ATCC BAA-895 / CDC 4225-83 / SGSC4696), this protein is Urease accessory protein UreF.